A 469-amino-acid chain; its full sequence is Spliceosome-associated protein CWC27 homolog (469 aa).

Position 2 is an N-acetylserine (Ser2). The PPIase cyclophilin-type domain maps to 11–166; that stretch reads TNGKVLLKTT…NPHRIKSCEV (156 aa). Residues 175 to 193 show a composition bias toward basic and acidic residues; sequence TPREIKKPKNEKPEEEVKK. Disordered regions lie at residues 175 to 415 and 428 to 469; these read TPRE…DDEG and RKVK…KERR. Positions 206 to 229 form a coiled coil; the sequence is SFGEEAEEEEEEVNRVSQSMKGRS. Basic and acidic residues predominate over residues 231 to 241; sequence SSHDLLKDDPH. Residues 256–278 show a composition bias toward acidic residues; that stretch reads TGDLEDDGEDDSAERDEYMEDDE. 2 stretches are compositionally biased toward basic and acidic residues: residues 302 to 341 and 356 to 368; these read GDGE…KVEE and EYRR…EALR. Positions 309-371 form a coiled coil; that stretch reads ASRSEELRKE…QKYEALRKQQ (63 aa). Positions 384–403 are enriched in polar residues; sequence ALLSQFKSKLTQAITETPEN. The span at 454–469 shows a compositional bias: basic and acidic residues; it reads RREESKKLLREKKERR.

The protein belongs to the cyclophilin-type PPIase family. Part of the activated spliceosome B/catalytic step 1 spliceosome, one of the forms of the spliceosome which has a well-formed active site but still cannot catalyze the branching reaction and is composed at least of 52 proteins, the U2, U5 and U6 snRNAs and the pre-mRNA. Recruited during early steps of activated spliceosome B maturation, it is probably one of the first proteins released from this complex as he matures to the spliceosome C complex. Component of the minor spliceosome, which splices U12-type introns.

The protein localises to the nucleus. In terms of biological role, as part of the spliceosome, plays a role in pre-mRNA splicing. Probable inactive PPIase with no peptidyl-prolyl cis-trans isomerase activity. As a component of the minor spliceosome, involved in the splicing of U12-type introns in pre-mRNAs. In Mus musculus (Mouse), this protein is Spliceosome-associated protein CWC27 homolog.